Here is a 400-residue protein sequence, read N- to C-terminus: Leukosialin (400 aa).

The first 19 residues, 1 to 19, serve as a signal peptide directing secretion; it reads MATLLLLLGVLVVSPDALG. Residues 20 to 253 lie on the Extracellular side of the membrane; sequence STTAVQTPTS…PFRNPDENSR (234 aa). 4 O-linked (GalNAc...) threonine glycosylation sites follow: Thr-21, Thr-22, Thr-26, and Thr-28. 2 stretches are compositionally biased toward polar residues: residues 21–51 and 58–112; these read TTAV…SITS and TGDQ…TPHA. The interval 21 to 224 is disordered; sequence TTAVQTPTSG…SSGASGPQVS (204 aa). O-linked (GalNAc...) serine glycosylation is found at Ser-29 and Ser-35. Residue Thr-36 is glycosylated (O-linked (GalNAc...) threonine). 3 O-linked (GalNAc...) serine glycosylation sites follow: Ser-37, Ser-41, and Ser-42. Thr-46 and Thr-47 each carry an O-linked (GalNAc...) threonine glycan. Ser-48 is a glycosylation site (O-linked (GalNAc...) serine). O-linked (GalNAc...) threonine glycans are attached at residues Thr-50, Thr-58, and Thr-69. 2 O-linked (GalNAc...) serine glycosylation sites follow: Ser-99 and Ser-103. Thr-109 and Thr-113 each carry an O-linked (GalNAc...) threonine glycan. O-linked (GalNAc...) serine glycosylation occurs at Ser-114. Polar residues-rich tracts occupy residues 121–164 and 172–182; these read TANS…SRGT and ATVSLETSKGT. Thr-136, Thr-137, Thr-173, and Thr-178 each carry an O-linked (GalNAc...) threonine glycan. A compositionally biased stretch (low complexity) spans 196–211; sequence TSTGTTGPPVTMTTGS. Polar residues predominate over residues 212 to 224; it reads LEPSSGASGPQVS. Asn-239 is a glycosylation site (N-linked (GlcNAc...) asparagine). A helical transmembrane segment spans residues 254-276; that stretch reads GMLPVAVLVALLAVIVLVALLLL. The Cytoplasmic segment spans residues 277 to 400; it reads WRRRQKRRTG…EPEGGDGAAP (124 aa). The tract at residues 278–308 is required for interaction with EZR, MSN and RDX and for co-localization to microvilli; sequence RRRQKRRTGALVLSRGGKRNGVVDAWAGPAQ. A Nuclear localization signal motif is present at residues 282–296; the sequence is KRRTGALVLSRGGKR. Ser-291 is modified (phosphoserine). Positions 320 to 332 are enriched in gly residues; that stretch reads GGSGGDKGSGFPD. The interval 320–400 is disordered; the sequence is GGSGGDKGSG…EPEGGDGAAP (81 aa). The residue at position 336 (Ser-336) is a Phosphoserine. A Phosphothreonine modification is found at Thr-341. Phosphoserine is present on Ser-351. Ser-355 bears the Phosphoserine; by PKC/PRKCQ mark. 2 positions are modified to phosphoserine: Ser-368 and Ser-379.

Interacts with SIGLEC1. In terms of assembly, monomer. Interacts with CTNNB1. Interacts with RDX (via FERM domain), EZR and MSN. In terms of processing, glycosylated; has a high content of sialic acid and O-linked carbohydrate structures. Post-translationally, phosphorylation at Ser-355 is regulated by chemokines, requires its association with ERM proteins (EZR, RDX and MSN) and is essential for its function in the regulation of T-cell trafficking to lymph nodes. Has a high content of sialic acid and O-linked carbohydrate structures. In terms of processing, cleavage by CTSG releases its extracellular domain and triggers its intramembrane proteolysis by gamma-secretase releasing the CD43 cytoplasmic tail chain (CD43-ct) which translocates to the nucleus. Post-translationally, sumoylated. In terms of tissue distribution, cell surface of thymocytes, T-lymphocytes, neutrophils, plasma cells and myelomas.

The protein resides in the membrane. It localises to the cell projection. The protein localises to the microvillus. Its subcellular location is the uropodium. It is found in the nucleus. The protein resides in the PML body. In terms of biological role, predominant cell surface sialoprotein of leukocytes which regulates multiple T-cell functions, including T-cell activation, proliferation, differentiation, trafficking and migration. Positively regulates T-cell trafficking to lymph-nodes via its association with ERM proteins (EZR, RDX and MSN). Negatively regulates Th2 cell differentiation and predisposes the differentiation of T-cells towards a Th1 lineage commitment. Promotes the expression of IFN-gamma by T-cells during T-cell receptor (TCR) activation of naive cells and induces the expression of IFN-gamma by CD4(+) T-cells and to a lesser extent by CD8(+) T-cells. Plays a role in preparing T-cells for cytokine sensing and differentiation into effector cells by inducing the expression of cytokine receptors IFNGR and IL4R, promoting IFNGR and IL4R signaling and by mediating the clustering of IFNGR with TCR. Acts as a major E-selectin ligand responsible for Th17 cell rolling on activated vasculature and recruitment during inflammation. Mediates Th17 cells, but not Th1 cells, adhesion to E-selectin. Acts as a T-cell counter-receptor for SIGLEC1. Its function is as follows. Protects cells from apoptotic signals, promoting cell survival. The chain is Leukosialin (SPN) from Homo sapiens (Human).